The chain runs to 66 residues: UPF0434 protein Mnod_1613 (66 aa).

This sequence belongs to the UPF0434 family.

The sequence is that of UPF0434 protein Mnod_1613 from Methylobacterium nodulans (strain LMG 21967 / CNCM I-2342 / ORS 2060).